The primary structure comprises 111 residues: Secreted RxLR effector protein 159 (111 aa).

Positions 1-21 are cleaved as a signal peptide; the sequence is MRGAYYVAIAFLVAASSRTAA. Residues 50–71 carry the RxLR-dEER motif; the sequence is RVLRGSRDLKDKLAVYANDEQR. Residue Asn81 is glycosylated (N-linked (GlcNAc...) asparagine).

It belongs to the RxLR effector family.

The protein resides in the secreted. It localises to the host nucleus. It is found in the host cytoplasm. Secreted effector that completely suppresses the host cell death induced by cell death-inducing proteins. This Plasmopara viticola (Downy mildew of grapevine) protein is Secreted RxLR effector protein 159.